A 281-amino-acid chain; its full sequence is Pantothenate synthetase (281 aa).

ATP is bound at residue 30–37; sequence MGNLHQGH. The Proton donor role is filled by histidine 37. (R)-pantoate is bound at residue glutamine 61. Residue glutamine 61 coordinates beta-alanine. 149–152 contributes to the ATP binding site; it reads GRKD. Glutamine 155 is a binding site for (R)-pantoate. ATP is bound by residues isoleucine 178 and 186–189; that span reads MSSR.

It belongs to the pantothenate synthetase family. In terms of assembly, homodimer.

The protein localises to the cytoplasm. It catalyses the reaction (R)-pantoate + beta-alanine + ATP = (R)-pantothenate + AMP + diphosphate + H(+). The protein operates within cofactor biosynthesis; (R)-pantothenate biosynthesis; (R)-pantothenate from (R)-pantoate and beta-alanine: step 1/1. In terms of biological role, catalyzes the condensation of pantoate with beta-alanine in an ATP-dependent reaction via a pantoyl-adenylate intermediate. This chain is Pantothenate synthetase, found in Shewanella denitrificans (strain OS217 / ATCC BAA-1090 / DSM 15013).